The primary structure comprises 119 residues: Secreted RxLR effector protein RXLR-C04 (119 aa).

An N-terminal signal peptide occupies residues 1–22 (MRLSYIFVVVATIITNCDIASA). The short motif at 40–77 (RILRQTNDSDDLEPIRHAMLDMELLEKIAKDPKYAEEV) is the RxLR-dEER element. A glycan (N-linked (GlcNAc...) asparagine) is linked at N46.

The protein belongs to the RxLR effector family.

The protein resides in the secreted. The protein localises to the host cytoplasm. It is found in the host nucleus. Secreted effector that suppresses pattern-triggered immunity (PTI) in plant host. This chain is Secreted RxLR effector protein RXLR-C04, found in Plasmopara halstedii (Downy mildew of sunflower).